Reading from the N-terminus, the 612-residue chain is Glutamine--fructose-6-phosphate aminotransferase [isomerizing] (612 aa).

Cys-2 acts as the Nucleophile; for GATase activity in catalysis. Residues 2-217 (CGIVGGVAER…EGDIARLTRD (216 aa)) form the Glutamine amidotransferase type-2 domain. 2 consecutive SIS domains span residues 283–428 (AEAD…VKEQ) and 461–602 (LSEL…VDQP). Lys-607 acts as the For Fru-6P isomerization activity in catalysis.

In terms of assembly, homodimer.

The protein localises to the cytoplasm. The catalysed reaction is D-fructose 6-phosphate + L-glutamine = D-glucosamine 6-phosphate + L-glutamate. Catalyzes the first step in hexosamine metabolism, converting fructose-6P into glucosamine-6P using glutamine as a nitrogen source. This Acinetobacter baylyi (strain ATCC 33305 / BD413 / ADP1) protein is Glutamine--fructose-6-phosphate aminotransferase [isomerizing].